Reading from the N-terminus, the 700-residue chain is Stonustoxin subunit beta (700 aa).

Positions 2-264 (PSDILVVAAL…EAPQLMADSS (263 aa)) are structural MACPF/CDC pore-forming domain. A structural FAT domain region spans residues 265–384 (TPILRKVRNT…DILTKAKPKV (120 aa)). Residues 385 to 514 (IFNQGVLFKG…PYMPGVESIK (130 aa)) form a thioredoxin (THX) domain region. The 195-residue stretch at 506–700 (YMPGVESIKD…QKVNGQIKLL (195 aa)) folds into the B30.2/SPRY domain.

This sequence belongs to the SNTX/VTX toxin family. As to quaternary structure, heterodimer of alpha and beta subunits; non-covalently linked. In terms of processing, intrachain disulfide bonds may be present in the heterodimer. Not glycosylated. In terms of tissue distribution, expressed by the venom gland.

The protein localises to the secreted. This lethal (towards mammals) heterodimer induces hemolytic activities due to its ability to form pores in the cell membrane. The pore may be composed of 10 SNTX-alpha/beta heterodimers. The toxin elicits potent hypotension which is endothelium-dependent and appears to be mediated by the nitric oxide pathway and activation of potassium channels. In addition, it displays edema-inducing activities, increases vascular permeability. It also shows myotoxic activities and interferes irreversibly with neuromuscular function. It also induces irreversible platelet aggregation in rabbit or rat but not in human or mouse whole blood. In addition, it has been observed to increase spontaneous quantal acetylcholine release from isolated frog cutaneous pectoris motor endings. The protein is Stonustoxin subunit beta of Synanceia horrida (Estuarine stonefish).